The chain runs to 360 residues: Phenylalanine--tRNA ligase alpha subunit (360 aa).

Glu260 lines the Mg(2+) pocket.

It belongs to the class-II aminoacyl-tRNA synthetase family. Phe-tRNA synthetase alpha subunit type 1 subfamily. In terms of assembly, tetramer of two alpha and two beta subunits. Mg(2+) serves as cofactor.

Its subcellular location is the cytoplasm. The enzyme catalyses tRNA(Phe) + L-phenylalanine + ATP = L-phenylalanyl-tRNA(Phe) + AMP + diphosphate + H(+). In Methylobacterium radiotolerans (strain ATCC 27329 / DSM 1819 / JCM 2831 / NBRC 15690 / NCIMB 10815 / 0-1), this protein is Phenylalanine--tRNA ligase alpha subunit.